The chain runs to 448 residues: Exodeoxyribonuclease 7 large subunit (448 aa).

This sequence belongs to the XseA family. In terms of assembly, heterooligomer composed of large and small subunits.

Its subcellular location is the cytoplasm. The enzyme catalyses Exonucleolytic cleavage in either 5'- to 3'- or 3'- to 5'-direction to yield nucleoside 5'-phosphates.. In terms of biological role, bidirectionally degrades single-stranded DNA into large acid-insoluble oligonucleotides, which are then degraded further into small acid-soluble oligonucleotides. This is Exodeoxyribonuclease 7 large subunit from Shewanella baltica (strain OS195).